A 93-amino-acid chain; its full sequence is Small ribosomal subunit protein uS19 (93 aa).

It belongs to the universal ribosomal protein uS19 family.

Protein S19 forms a complex with S13 that binds strongly to the 16S ribosomal RNA. The sequence is that of Small ribosomal subunit protein uS19 from Campylobacter concisus (strain 13826).